Consider the following 126-residue polypeptide: UPF0102 protein DNO_0639 (126 aa).

Belongs to the UPF0102 family.

The protein is UPF0102 protein DNO_0639 of Dichelobacter nodosus (strain VCS1703A).